The primary structure comprises 962 residues: Ubiquitin carboxyl-terminal hydrolase 4 (962 aa).

Residues 11–122 (PDVETQKTEL…GQQPIVRKVV (112 aa)) enclose the DUSP domain. Residues 27–216 (TLQRGAQWYL…LYQGQVLVIE (190 aa)) form a necessary for interaction with SART3 region. Positions 133 to 141 (VEVYLLELK) match the Nuclear export signal motif. The Ubiquitin-like 1 domain maps to 142 to 226 (LCENSDPTNV…PQNEDGTWPR (85 aa)). The interval 220-249 (EDGTWPRQSLQSKSSTAPSRNFTTSSKPSA) is disordered. Positions 225–249 (PRQSLQSKSSTAPSRNFTTSSKPSA) are enriched in polar residues. The tract at residues 229–295 (LQSKSSTAPS…SYNCQEPPSP (67 aa)) is required for USP4 activation by providing conformational flexibility between the DUSP and catalytic domains. A USP domain is found at 302 to 922 (CGLGNLGNTC…AAYVLFYQRR (621 aa)). Cysteine 311 (nucleophile) is an active-site residue. Residues 384-386 (PQF) are regulates ubiquitin dissociation. The necessary for interaction with RBL2 stretch occupies residues 405-407 (LHE). Serine 445 is subject to Phosphoserine. Residues 459 to 463 (LVCPE) are necessary for interaction with RB1 and RBL2. Zn(2+) is bound by residues cysteine 461 and cysteine 464. Residues 483–571 (LKKDRIMEVF…IFVYEVCNTS (89 aa)) form the Ubiquitin-like 2 domain. Residues 485-774 (KDRIMEVFLV…SQPQKKKKAA (290 aa)) form an interacts with DUSP and ubiquitin-like 1 domains and is required for USP4 activation region. The disordered stretch occupies residues 638–699 (EFLSSPLEPG…SESAQKVKGQ (62 aa)). Position 655 is a phosphoserine (serine 655). Positions 657-666 (EGDEEEEMDH) are enriched in acidic residues. Residues serine 675 and serine 680 each carry the phosphoserine modification. Positions 766–771 (QPQKKK) match the Nuclear localization signal motif. Residues cysteine 798 and cysteine 801 each coordinate Zn(2+). The Proton acceptor role is filled by histidine 880. Low complexity predominate over residues 928–937 (STSSLGSFPG). Positions 928–962 (STSSLGSFPGSDGGVKLSSSHQGMGDEEAYNMDTN) are disordered. Residues 952–962 (GDEEAYNMDTN) are compositionally biased toward acidic residues.

Belongs to the peptidase C19 family. USP4 subfamily. In terms of assembly, interacts with RB1 (both dephosphorylated and hypophosphorylated forms). Interacts with RBL1 and RBL2. Interacts with ADORA2A (via cytoplasmic C-terminus); the interaction is direct. Interacts with SART3; recruits USP4 to its substrate PRPF3. In terms of processing, phosphorylated at Ser-445 by PKB/AKT1 in response to EGF stimulus, promoting its ability deubiquitinate RHEB. Post-translationally, monoubiquitinated by TRIM21. Ubiquitination does not lead to its proteasomal degradation. Autodeubiquitinated. As to expression, expressed in brain, kidney, liver and spleen (at protein level).

It localises to the cytoplasm. The protein localises to the nucleus. The catalysed reaction is Thiol-dependent hydrolysis of ester, thioester, amide, peptide and isopeptide bonds formed by the C-terminal Gly of ubiquitin (a 76-residue protein attached to proteins as an intracellular targeting signal).. The completion of the deubiquitinase reaction is mediated by the DUSP and ubiquitin-like 1 domains which promotes the release of ubiquitin from the catalytic site enabling subsequent reactions to occur. Deubiquitinating enzyme that removes conjugated ubiquitin from target proteins. Deubiquitinates PDPK1. Deubiquitinates TRIM21. Deubiquitinates receptor ADORA2A which increases the amount of functional receptor at the cell surface. Deubiquitinates HAS2. Deubiquitinates RHEB in response to EGF signaling, promoting mTORC1 signaling. May regulate mRNA splicing through deubiquitination of the U4 spliceosomal protein PRPF3. This may prevent its recognition by the U5 component PRPF8 thereby destabilizing interactions within the U4/U6.U5 snRNP. May also play a role in the regulation of quality control in the ER. This is Ubiquitin carboxyl-terminal hydrolase 4 (Usp4) from Mus musculus (Mouse).